The primary structure comprises 183 residues: Streptavidin (183 aa).

The N-terminal stretch at 1 to 24 (MRKIVVAAIAVSLTTVSITASASA) is a signal peptide. Residues 37–159 (AEAGITGTWY…GHDTFTKVKP (123 aa)) form the Avidin-like domain. Biotin is bound by residues tyrosine 67 and tyrosine 78. A Cell attachment site; atypical motif is present at residues 83–85 (RYD). 3 residues coordinate biotin: tryptophan 116, tryptophan 132, and tryptophan 144.

This sequence belongs to the avidin/streptavidin family. Homotetramer.

It localises to the secreted. Its function is as follows. The biological function of streptavidin is not known. Forms a strong non-covalent specific complex with biotin (one molecule of biotin per subunit of streptavidin). The chain is Streptavidin from Streptomyces avidinii.